Here is a 434-residue protein sequence, read N- to C-terminus: RHOMBOID-like protein 9, chloroplastic (434 aa).

Residues Met1–Arg68 constitute a chloroplast transit peptide. The next 8 membrane-spanning stretches (helical) occupy residues Phe182–Ala202, Met209–Gly229, Met238–Gly258, Leu267–Leu287, Thr289–Val309, Leu326–Ile346, Leu352–Gly372, and Phe399–Gly419.

This sequence belongs to the peptidase S54 family.

The protein resides in the plastid. The protein localises to the chloroplast membrane. Probable rhomboid-type serine protease that catalyzes intramembrane proteolysis. The polypeptide is RHOMBOID-like protein 9, chloroplastic (Arabidopsis thaliana (Mouse-ear cress)).